Here is a 326-residue protein sequence, read N- to C-terminus: Meiotically up-regulated gene 113 protein (326 aa).

It localises to the cytoplasm. Has a role in meiosis. The sequence is that of Meiotically up-regulated gene 113 protein (mug113) from Schizosaccharomyces pombe (strain 972 / ATCC 24843) (Fission yeast).